A 333-amino-acid chain; its full sequence is Methionyl-tRNA formyltransferase (333 aa).

(6S)-5,6,7,8-tetrahydrofolate is bound at residue 106–109; the sequence is SLLP.

It belongs to the Fmt family.

The enzyme catalyses L-methionyl-tRNA(fMet) + (6R)-10-formyltetrahydrofolate = N-formyl-L-methionyl-tRNA(fMet) + (6S)-5,6,7,8-tetrahydrofolate + H(+). Its function is as follows. Attaches a formyl group to the free amino group of methionyl-tRNA(fMet). The formyl group appears to play a dual role in the initiator identity of N-formylmethionyl-tRNA by promoting its recognition by IF2 and preventing the misappropriation of this tRNA by the elongation apparatus. This Elusimicrobium minutum (strain Pei191) protein is Methionyl-tRNA formyltransferase.